The sequence spans 369 residues: Queuine tRNA-ribosyltransferase (369 aa).

Asp89 serves as the catalytic Proton acceptor. Substrate-binding positions include 89–93 (DSGGF), Asp142, Gln184, and Gly211. An RNA binding region spans residues 242 to 248 (GGGSPEL). Asp261 functions as the Nucleophile in the catalytic mechanism. The tract at residues 266–270 (TRIAR) is RNA binding; important for wobble base 34 recognition. Cys299, Cys301, Cys304, and His330 together coordinate Zn(2+).

This sequence belongs to the queuine tRNA-ribosyltransferase family. In terms of assembly, homodimer. Within each dimer, one monomer is responsible for RNA recognition and catalysis, while the other monomer binds to the replacement base PreQ1. The cofactor is Zn(2+).

It carries out the reaction 7-aminomethyl-7-carbaguanine + guanosine(34) in tRNA = 7-aminomethyl-7-carbaguanosine(34) in tRNA + guanine. Its pathway is tRNA modification; tRNA-queuosine biosynthesis. Its function is as follows. Catalyzes the base-exchange of a guanine (G) residue with the queuine precursor 7-aminomethyl-7-deazaguanine (PreQ1) at position 34 (anticodon wobble position) in tRNAs with GU(N) anticodons (tRNA-Asp, -Asn, -His and -Tyr). Catalysis occurs through a double-displacement mechanism. The nucleophile active site attacks the C1' of nucleotide 34 to detach the guanine base from the RNA, forming a covalent enzyme-RNA intermediate. The proton acceptor active site deprotonates the incoming PreQ1, allowing a nucleophilic attack on the C1' of the ribose to form the product. After dissociation, two additional enzymatic reactions on the tRNA convert PreQ1 to queuine (Q), resulting in the hypermodified nucleoside queuosine (7-(((4,5-cis-dihydroxy-2-cyclopenten-1-yl)amino)methyl)-7-deazaguanosine). The protein is Queuine tRNA-ribosyltransferase of Thermotoga sp. (strain RQ2).